A 1420-amino-acid polypeptide reads, in one-letter code: DNA-directed RNA polymerase subunit beta'' (1420 aa).

The Zn(2+) site is built by cysteine 220, cysteine 295, cysteine 302, and cysteine 305.

Belongs to the RNA polymerase beta' chain family. RpoC2 subfamily. As to quaternary structure, in plastids the minimal PEP RNA polymerase catalytic core is composed of four subunits: alpha, beta, beta', and beta''. When a (nuclear-encoded) sigma factor is associated with the core the holoenzyme is formed, which can initiate transcription. Requires Zn(2+) as cofactor.

Its subcellular location is the plastid. The protein localises to the chloroplast. It carries out the reaction RNA(n) + a ribonucleoside 5'-triphosphate = RNA(n+1) + diphosphate. DNA-dependent RNA polymerase catalyzes the transcription of DNA into RNA using the four ribonucleoside triphosphates as substrates. The protein is DNA-directed RNA polymerase subunit beta'' of Adiantum capillus-veneris (Maidenhair fern).